The primary structure comprises 45 residues: MNSALFLAKLPEAYAVFKPIVDILPVIPVFFLLLAFVWQAAIGFR.

Positions 1–8 (MNSALFLA) are excised as a propeptide. Residues 23–43 (ILPVIPVFFLLLAFVWQAAIG) traverse the membrane as a helical segment.

The protein belongs to the PsbK family. PSII is composed of 1 copy each of membrane proteins PsbA, PsbB, PsbC, PsbD, PsbE, PsbF, PsbH, PsbI, PsbJ, PsbK, PsbL, PsbM, PsbT, PsbX, PsbY, PsbZ, Psb30/Ycf12, at least 3 peripheral proteins of the oxygen-evolving complex and a large number of cofactors. It forms dimeric complexes.

It is found in the plastid. The protein localises to the chloroplast thylakoid membrane. One of the components of the core complex of photosystem II (PSII). PSII is a light-driven water:plastoquinone oxidoreductase that uses light energy to abstract electrons from H(2)O, generating O(2) and a proton gradient subsequently used for ATP formation. It consists of a core antenna complex that captures photons, and an electron transfer chain that converts photonic excitation into a charge separation. This Porphyra purpurea (Red seaweed) protein is Photosystem II reaction center protein K.